The sequence spans 414 residues: Glutamyl-tRNA reductase (414 aa).

Substrate is bound by residues 48-51 (TCNR), serine 104, 109-111 (EAQ), and glutamine 115. Cysteine 49 serves as the catalytic Nucleophile. 184-189 (GAGEMI) is a binding site for NADP(+).

The protein belongs to the glutamyl-tRNA reductase family. In terms of assembly, homodimer.

The catalysed reaction is (S)-4-amino-5-oxopentanoate + tRNA(Glu) + NADP(+) = L-glutamyl-tRNA(Glu) + NADPH + H(+). It participates in porphyrin-containing compound metabolism; protoporphyrin-IX biosynthesis; 5-aminolevulinate from L-glutamyl-tRNA(Glu): step 1/2. Functionally, catalyzes the NADPH-dependent reduction of glutamyl-tRNA(Glu) to glutamate 1-semialdehyde (GSA). The chain is Glutamyl-tRNA reductase from Methylobacillus flagellatus (strain ATCC 51484 / DSM 6875 / VKM B-1610 / KT).